A 66-amino-acid chain; its full sequence is Small ribosomal subunit protein eS27 (66 aa).

Cysteine 21, cysteine 24, cysteine 40, and cysteine 43 together coordinate Zn(2+). The C4-type zinc finger occupies 21–43 (CRQCNNEQVIFSNATFPVRCLSC).

The protein belongs to the eukaryotic ribosomal protein eS27 family. Part of the 30S ribosomal subunit. Zn(2+) serves as cofactor.

This chain is Small ribosomal subunit protein eS27, found in Sulfolobus acidocaldarius (strain ATCC 33909 / DSM 639 / JCM 8929 / NBRC 15157 / NCIMB 11770).